Reading from the N-terminus, the 269-residue chain is MKI67 FHA domain-interacting nucleolar phosphoprotein (269 aa).

Positions 45-123 (GVLYVGHLPR…RIIKCHVIPP (79 aa)) constitute an RRM domain. Residues 234 to 269 (DEIVIKVKPLPENSDDVEESEEESAEEDEGEEEEAA) form a disordered region. Over residues 246-269 (NSDDVEESEEESAEEDEGEEEEAA) the composition is skewed to acidic residues.

The protein resides in the nucleus. The protein localises to the nucleolus. Functionally, plays an essential role in early embryonic development. This chain is MKI67 FHA domain-interacting nucleolar phosphoprotein (nifk), found in Danio rerio (Zebrafish).